Reading from the N-terminus, the 599-residue chain is Glycerophosphodiester phosphodiesterase domain-containing protein 5 (599 aa).

Residues 1–42 (MVKHQPLQYYEPQLCLSCLTGIYGCRWKRYQRSHDDTTKWER) lie on the Cytoplasmic side of the membrane. Disulfide bonds link cysteine 15–cysteine 18 and cysteine 25–cysteine 576. Residues 43 to 63 (LWFLILTSSFFLTLVWFYFWW) form a helical membrane-spanning segment. Residues 64–87 (EVHNDYNEINWFLYNRMGYWSDWS) are Extracellular-facing. The chain crosses the membrane as a helical span at residues 88–108 (IPILVTTAAGFTYITVLLILA). Over 109-125 (LCHIAVGQQMNLHWLHK) the chain is Cytoplasmic. The helical transmembrane segment at 126–146 (IGLMTTLITTVVTMSSIAQLW) threads the bilayer. The Extracellular portion of the chain corresponds to 147-160 (DDEWEMVFISLQAT). The chain crosses the membrane as a helical span at residues 161–181 (APFLHIGALAAVTALSWLIAG). At 182 to 192 (QFARMEKATSQ) the chain is on the cytoplasmic side. The chain crosses the membrane as a helical span at residues 193–213 (MLMVTAYLAVVVALYLVPLTI). At 214–497 (SSPCIMEKKA…IWLMPPDEYR (284 aa)) the chain is on the extracellular side. Residues 228–485 (PAIIGHRGAP…DSSHVLRKVP (258 aa)) form the GP-PDE domain. N-linked (GlcNAc...) asparagine glycosylation is found at asparagine 301, asparagine 336, asparagine 352, asparagine 374, and asparagine 448. A helical transmembrane segment spans residues 498 to 518 (LIWITSDLISFIIIVGVFIFQ). The Cytoplasmic segment spans residues 519–599 (NYHNDQWRLG…DHRDTRLRMN (81 aa)).

Belongs to the glycerophosphoryl diester phosphodiesterase family. Interacts with PRDX1; forms a mixed-disulfide with PRDX1, leading to disrupt intramolecular disulfide bond between Cys-25 and Cys-576. Post-translationally, intramolecular disulfide bond between Cys-25 and Cys-576 is reduced by PRDX1. Detected in mature motor neurons.

The protein resides in the endomembrane system. Its subcellular location is the cytoplasm. The protein localises to the perinuclear region. It is found in the cell projection. It localises to the growth cone. It catalyses the reaction a 1,2-diacyl-sn-glycero-3-phospho-(1D-myo-inositol-4,5-bisphosphate) + H2O = 1D-myo-inositol 1,4,5-trisphosphate + a 1,2-diacyl-sn-glycerol + H(+). The enzyme catalyses sn-glycerol 3-phosphocholine + H2O = sn-glycerol 3-phosphate + choline + H(+). Its activity is regulated as follows. Activated by PRDX1 by reduction of an intramolecular disulfide bond. Its function is as follows. Glycerophosphodiester phosphodiesterase that promotes cell cycle exit and drives spinal motor neuron differentiation. Mediates the cleavage of glycosylphosphatidylinositol (GPI) anchor of target proteins: removes the GPI-anchor of RECK, leading to release RECK from the plasma membrane. May contribute to the osmotic regulation of cellular glycerophosphocholine. This chain is Glycerophosphodiester phosphodiesterase domain-containing protein 5 (GDPD5), found in Gallus gallus (Chicken).